The chain runs to 72 residues: Conotoxin VnMKLT2-021 (72 aa).

Positions 1 to 22 (MKLTCVLIVAVLFLTACQLTTA) are cleaved as a signal peptide. Positions 23–45 (ASYARSEREHPDLGSSDQNSKLT) are excised as a propeptide. The interval 25-44 (YARSEREHPDLGSSDQNSKL) is disordered. 3 disulfide bridges follow: cysteine 48–cysteine 62, cysteine 55–cysteine 66, and cysteine 61–cysteine 71.

This sequence belongs to the conotoxin O1 superfamily. In terms of tissue distribution, expressed by the venom duct.

Its subcellular location is the secreted. This chain is Conotoxin VnMKLT2-021, found in Conus ventricosus (Mediterranean cone).